Reading from the N-terminus, the 367-residue chain is Adenosine deaminase (367 aa).

Residues His-46 and His-48 each coordinate Zn(2+). Residues 48-50, Asp-176, and Gly-205 contribute to the a purine D-ribonucleoside site; that span reads HLD. The tract at residues 174 to 188 is gating helix loop; regulates binding affinity for substrates and thus substrate selectivity; sequence TGDGGLSHERMKEAA. His-230 is a binding site for Zn(2+). A purine D-ribonucleoside contacts are provided by Glu-233, His-257, and Asp-314. A Zn(2+)-binding site is contributed by Asp-314.

Belongs to the metallo-dependent hydrolases superfamily. Adenosine and AMP deaminases family. It depends on Zn(2+) as a cofactor.

It catalyses the reaction adenosine + H2O + H(+) = inosine + NH4(+). It carries out the reaction S-methyl-5'-thioadenosine + H2O + H(+) = S-methyl-5'-thioinosine + NH4(+). Its pathway is purine metabolism; purine nucleoside salvage. Inhibited by coformycin and methylthiocoformycin (MT-coformycin). Its function is as follows. Catalyzes the hydrolytic deamination of adenosine to produce inosine. Unlike mammalian adenosine deaminases, also catalyzes the deamination of 5'-methylthioadenosine (MTA), a by-product of polyamine biosynthesis, to produce 5'-methylthioinosine (MTI). Plays an essential role in the purine salvage pathway which allows the parasite to use host cell purines for the synthesis of nucleic acids. This is Adenosine deaminase from Plasmodium falciparum (isolate 3D7).